A 351-amino-acid chain; its full sequence is Uroporphyrinogen decarboxylase (351 aa).

Residues 25 to 29 (RQAGR), aspartate 74, tyrosine 151, serine 206, and histidine 325 each bind substrate.

It belongs to the uroporphyrinogen decarboxylase family. In terms of assembly, homodimer.

It localises to the cytoplasm. It catalyses the reaction uroporphyrinogen III + 4 H(+) = coproporphyrinogen III + 4 CO2. It participates in porphyrin-containing compound metabolism; protoporphyrin-IX biosynthesis; coproporphyrinogen-III from 5-aminolevulinate: step 4/4. In terms of biological role, catalyzes the decarboxylation of four acetate groups of uroporphyrinogen-III to yield coproporphyrinogen-III. The sequence is that of Uroporphyrinogen decarboxylase from Pelodictyon phaeoclathratiforme (strain DSM 5477 / BU-1).